The following is a 388-amino-acid chain: Succinate--CoA ligase [ADP-forming] subunit beta (388 aa).

Residues 9–244 form the ATP-grasp domain; the sequence is KQLFAEFGLP…ASQEDAREAH (236 aa). Residues lysine 46, 53-55, glutamate 99, serine 102, and glutamate 107 each bind ATP; that span reads GRG. Mg(2+) is bound by residues asparagine 199 and aspartate 213. Substrate contacts are provided by residues asparagine 264 and 321-323; that span reads GIV.

This sequence belongs to the succinate/malate CoA ligase beta subunit family. In terms of assembly, heterotetramer of two alpha and two beta subunits. It depends on Mg(2+) as a cofactor.

It catalyses the reaction succinate + ATP + CoA = succinyl-CoA + ADP + phosphate. The catalysed reaction is GTP + succinate + CoA = succinyl-CoA + GDP + phosphate. It participates in carbohydrate metabolism; tricarboxylic acid cycle; succinate from succinyl-CoA (ligase route): step 1/1. Its function is as follows. Succinyl-CoA synthetase functions in the citric acid cycle (TCA), coupling the hydrolysis of succinyl-CoA to the synthesis of either ATP or GTP and thus represents the only step of substrate-level phosphorylation in the TCA. The beta subunit provides nucleotide specificity of the enzyme and binds the substrate succinate, while the binding sites for coenzyme A and phosphate are found in the alpha subunit. The sequence is that of Succinate--CoA ligase [ADP-forming] subunit beta from Vibrio cholerae serotype O1 (strain ATCC 39541 / Classical Ogawa 395 / O395).